A 179-amino-acid polypeptide reads, in one-letter code: Adenine phosphoribosyltransferase (179 aa).

This sequence belongs to the purine/pyrimidine phosphoribosyltransferase family. Homodimer.

Its subcellular location is the cytoplasm. It catalyses the reaction AMP + diphosphate = 5-phospho-alpha-D-ribose 1-diphosphate + adenine. The protein operates within purine metabolism; AMP biosynthesis via salvage pathway; AMP from adenine: step 1/1. Functionally, catalyzes a salvage reaction resulting in the formation of AMP, that is energically less costly than de novo synthesis. This Methylacidiphilum infernorum (isolate V4) (Methylokorus infernorum (strain V4)) protein is Adenine phosphoribosyltransferase.